Here is a 301-residue protein sequence, read N- to C-terminus: 4-hydroxybenzoate octaprenyltransferase (301 aa).

7 consecutive transmembrane segments (helical) span residues 34-54 (IGSLLLLWPTWWALWLAAGGL), 57-77 (LWTLFVFTAGVWLTRSAGCVI), 108-128 (LWVFVVLMLVAFALVLSLNWL), 163-183 (WGIPMGFAAVQGSVPLLAWLL), 222-242 (DLIAQGVLYALMFAALVLVGL), 248-268 (IAYWAGLGIAALLVAYEFHIA), and 280-300 (FLHNNWVGLAIFVGIAASLAL).

It belongs to the UbiA prenyltransferase family. It depends on Mg(2+) as a cofactor.

It localises to the cell inner membrane. The catalysed reaction is all-trans-octaprenyl diphosphate + 4-hydroxybenzoate = 4-hydroxy-3-(all-trans-octaprenyl)benzoate + diphosphate. Its pathway is cofactor biosynthesis; ubiquinone biosynthesis. Its function is as follows. Catalyzes the prenylation of para-hydroxybenzoate (PHB) with an all-trans polyprenyl group. Mediates the second step in the final reaction sequence of ubiquinone-8 (UQ-8) biosynthesis, which is the condensation of the polyisoprenoid side chain with PHB, generating the first membrane-bound Q intermediate 3-octaprenyl-4-hydroxybenzoate. In Xanthomonas campestris pv. campestris (strain 8004), this protein is 4-hydroxybenzoate octaprenyltransferase.